A 178-amino-acid polypeptide reads, in one-letter code: Caveolin-1 (178 aa).

Serine 2 is subject to N-acetylserine. The residue at position 2 (serine 2) is a Phosphoserine. The required for homooligomerization stretch occupies residues 2–94 (SGGKYVDSEG…WKASFTTFTV (93 aa)). Residues 2 to 104 (SGGKYVDSEG…TKYWFYRLLS (103 aa)) are Cytoplasmic-facing. Lysine 5 bears the N6-acetyllysine; alternate mark. Lysine 5 is covalently cross-linked (Glycyl lysine isopeptide (Lys-Gly) (interchain with G-Cter in ubiquitin); alternate). Tyrosine 6 carries the phosphotyrosine modification. Position 9 is a phosphoserine (serine 9). Tyrosine 14 carries the post-translational modification Phosphotyrosine; by ABL1. A Phosphotyrosine modification is found at tyrosine 25. Residues lysine 26, lysine 30, lysine 39, lysine 47, and lysine 57 each participate in a glycyl lysine isopeptide (Lys-Gly) (interchain with G-Cter in ubiquitin) cross-link. The interval 82-94 (DGIWKASFTTFTV) is interaction with CAVIN3. Positions 105–125 (ALFGIPMALIWGIYFAILSFL) form an intramembrane region, helical. At 126–178 (HIWAVVPCIKSFLIEIQCISRVYSIYVHTFCDPLFEAIGKIFSNIRINMQKEI) the chain is on the cytoplasmic side. The segment at 131 to 142 (VPCIKSFLIEIQ) is interacts with SPRY1, SPRY2, SPRY3 and SPRY4. Residues cysteine 133, cysteine 143, and cysteine 156 are each lipidated (S-palmitoyl cysteine). Residues 149–160 (SIYVHTFCDPLF) are interacts with SPRY1, SPRY2, and SPRY4. An interacts with SPRY1, SPRY2, SPRY3 and SPRY4 region spans residues 167–178 (FSNIRINMQKEI).

It belongs to the caveolin family. In terms of assembly, homooligomer. Interacts with GLIPR2. Interacts with NOSTRIN. Interacts with SNAP25 and STX1A. Interacts (via the N-terminus) with DPP4; the interaction is direct. Interacts with CTNNB1, CDH1 and JUP. Interacts with PACSIN2; this interaction induces membrane tubulation. Interacts with SLC7A9. Interacts with BMX and BTK. Interacts with TGFBR1. Interacts with CAVIN3 (via leucine-zipper domain) in a cholesterol-sensitive manner. Interacts with CAVIN1. Interacts with EHD2 in a cholesterol-dependent manner. Forms a ternary complex with UBXN6 and VCP; mediates CAV1 targeting to lysosomes for degradation. Interacts with ABCG1; this interaction regulates ABCG1-mediated cholesterol efflux. Interacts with NEU3; this interaction enhances NEU3 sialidase activity within caveola. Interacts (via C-terminus) with SPRY1, SPRY2 (via C-terminus), SPRY3, and SPRY4. Interacts with IGFBP5; this interaction allows trafficking of IGFBP5 from the plasma membrane to the nucleus. Post-translationally, phosphorylated at Tyr-14 by ABL1 in response to oxidative stress. In terms of processing, ubiquitinated. Undergo monoubiquitination and multi- and/or polyubiquitination. Monoubiquitination of N-terminal lysines promotes integration in a ternary complex with UBXN6 and VCP which promotes oligomeric CAV1 targeting to lysosomes for degradation. Ubiquitinated by ZNRF1; leading to degradation and modulation of the TLR4-mediated immune response.

It is found in the golgi apparatus membrane. The protein resides in the cell membrane. Its subcellular location is the membrane. The protein localises to the caveola. It localises to the membrane raft. Its function is as follows. May act as a scaffolding protein within caveolar membranes. Forms a stable heterooligomeric complex with CAV2 that targets to lipid rafts and drives caveolae formation. Mediates the recruitment of CAVIN proteins (CAVIN1/2/3/4) to the caveolae. Interacts directly with G-protein alpha subunits and can functionally regulate their activity. Involved in the costimulatory signal essential for T-cell receptor (TCR)-mediated T-cell activation. Its binding to DPP4 induces T-cell proliferation and NF-kappa-B activation in a T-cell receptor/CD3-dependent manner. Recruits CTNNB1 to caveolar membranes and may regulate CTNNB1-mediated signaling through the Wnt pathway. Negatively regulates TGFB1-mediated activation of SMAD2/3 by mediating the internalization of TGFBR1 from membrane rafts leading to its subsequent degradation. Binds 20(S)-hydroxycholesterol (20(S)-OHC). The chain is Caveolin-1 (CAV1) from Muntiacus reevesi (Reeves' muntjac).